Here is a 444-residue protein sequence, read N- to C-terminus: C4-dicarboxylate transport protein 2 (444 aa).

The next 6 helical transmembrane spans lie at 23-43 (ILYV…WLWP), 61-81 (LIKM…IAHI), 95-115 (LVYF…VANV), 162-182 (GEIL…MGLG), 198-218 (AMFG…FGAM), and 236-256 (LIAT…GIIA).

The protein belongs to the dicarboxylate/amino acid:cation symporter (DAACS) (TC 2.A.23) family.

It is found in the cell inner membrane. Responsible for the transport of dicarboxylates such as succinate, fumarate, and malate from the periplasm across the membrane. The sequence is that of C4-dicarboxylate transport protein 2 from Bradyrhizobium diazoefficiens (strain JCM 10833 / BCRC 13528 / IAM 13628 / NBRC 14792 / USDA 110).